The following is a 107-amino-acid chain: Acidic phospholipase A2 braziliase-I (107 aa).

7 disulfides stabilise this stretch: cysteine 26–cysteine 100, cysteine 28–cysteine 44, cysteine 43–cysteine 86, cysteine 49–cysteine 107, cysteine 50–cysteine 79, cysteine 57–cysteine 72, and cysteine 66–cysteine 77. The Ca(2+) site is built by tyrosine 27, glycine 29, and glycine 31. Residue histidine 47 is part of the active site. Aspartate 48 contacts Ca(2+). Residue aspartate 80 is part of the active site.

In terms of assembly, monomer. Ca(2+) is required as a cofactor. In terms of tissue distribution, expressed by the venom gland.

Its subcellular location is the secreted. It catalyses the reaction a 1,2-diacyl-sn-glycero-3-phosphocholine + H2O = a 1-acyl-sn-glycero-3-phosphocholine + a fatty acid + H(+). Snake venom phospholipase A2 (PLA2) that induces significant edematogenic activity. Shows mild cytotoxicity on Trypanosoma cruzi and Leishmania infantum. Also inhibits ADP- and collagen-induced platelet aggregation. Does not show myotoxic activity. The polypeptide is Acidic phospholipase A2 braziliase-I (Bothrops brazili (Brazil's lancehead)).